We begin with the raw amino-acid sequence, 388 residues long: Processive diacylglycerol beta-glucosyltransferase (388 aa).

It belongs to the glycosyltransferase 28 family. UgtP subfamily.

It localises to the cell membrane. It carries out the reaction a 1,2-diacyl-3-O-(beta-D-glucopyranosyl)-sn-glycerol + UDP-alpha-D-glucose = a 1,2-diacyl-3-O-(beta-D-Glc-(1-&gt;6)-beta-D-Glc)-sn-glycerol + UDP + H(+). The catalysed reaction is a 1,2-diacyl-3-O-(beta-D-Glc-(1-&gt;6)-beta-D-Glc)-sn-glycerol + UDP-alpha-D-glucose = a 1,2-diacyl-3-O-(beta-D-Glc-(1-&gt;6)-beta-D-Glc-(1-&gt;6)-beta-D-Glc)-sn-glycerol + UDP + H(+). It catalyses the reaction a 1,2-diacyl-sn-glycerol + UDP-alpha-D-glucose = a 1,2-diacyl-3-O-(beta-D-glucopyranosyl)-sn-glycerol + UDP + H(+). It participates in glycolipid metabolism; diglucosyl-diacylglycerol biosynthesis. Functionally, processive glucosyltransferase involved in the biosynthesis of both the bilayer- and non-bilayer-forming membrane glucolipids. Is able to successively transfer up to three glucosyl residues to diacylglycerol (DAG), thereby catalyzing the formation of beta-monoglucosyl-DAG (3-O-(beta-D-glucopyranosyl)-1,2-diacyl-sn-glycerol), beta-diglucosyl-DAG (3-O-(beta-D-glucopyranosyl-beta-(1-&gt;6)-D-glucopyranosyl)-1,2-diacyl-sn-glycerol) and beta-triglucosyl-DAG (3-O-(beta-D-glucopyranosyl-beta-(1-&gt;6)-D-glucopyranosyl-beta-(1-&gt;6)-D-glucopyranosyl)-1,2-diacyl-sn-glycerol). Beta-diglucosyl-DAG is the predominant glycolipid found in Bacillales and is also used as a membrane anchor for lipoteichoic acid (LTA). The sequence is that of Processive diacylglycerol beta-glucosyltransferase from Bacillus cereus (strain ATCC 14579 / DSM 31 / CCUG 7414 / JCM 2152 / NBRC 15305 / NCIMB 9373 / NCTC 2599 / NRRL B-3711).